A 217-amino-acid chain; its full sequence is Dephospho-CoA kinase (217 aa).

Positions 2 to 217 (VIGLTGGIAS…RELARIEEQK (216 aa)) constitute a DPCK domain. 10-15 (ASGKST) contributes to the ATP binding site.

This sequence belongs to the CoaE family.

It localises to the cytoplasm. The catalysed reaction is 3'-dephospho-CoA + ATP = ADP + CoA + H(+). It functions in the pathway cofactor biosynthesis; coenzyme A biosynthesis; CoA from (R)-pantothenate: step 5/5. Functionally, catalyzes the phosphorylation of the 3'-hydroxyl group of dephosphocoenzyme A to form coenzyme A. The sequence is that of Dephospho-CoA kinase from Lactococcus lactis subsp. lactis (strain IL1403) (Streptococcus lactis).